Here is a 363-residue protein sequence, read N- to C-terminus: MLTFPLINDTSRKIIHIDMDAFFASVEVRDNPSLKVKPVVIARNPLQTGGRGVVSTCSYEARAFGIHSASAKEAYDLCPQAIFISGNYEKYTKVSKQVREIFKRYTDDIEAASIDEAYLDVTENKIGAQSAIKIAKLIQHDIFVELGLTCSAGVSYNKFLAKIASDYEKPHGLTLIMPEEALEFLAKLPVEKFHGVGKATVPKLHALGFFNGGDLQKADPVDLAERFGVYGWELYQKANGIHNSKVKNYRERKSVGKERTYGKLLYLPDDIKAELSKISGKVSDSLKSHQLKGSIVILKLRYSDFTTLTKRKSLAEKLESPEEIAEVAQEIFEELEYDESLGVRLLGVTVTEFGAQKATLDMQ.

The UmuC domain occupies 14-197; it reads IIHIDMDAFF…LPVEKFHGVG (184 aa). Residues D18 and D115 each contribute to the Mg(2+) site. E116 is a catalytic residue.

It belongs to the DNA polymerase type-Y family. Monomer. Mg(2+) is required as a cofactor.

The protein localises to the cytoplasm. It carries out the reaction DNA(n) + a 2'-deoxyribonucleoside 5'-triphosphate = DNA(n+1) + diphosphate. Functionally, poorly processive, error-prone DNA polymerase involved in untargeted mutagenesis. Copies undamaged DNA at stalled replication forks, which arise in vivo from mismatched or misaligned primer ends. These misaligned primers can be extended by PolIV. Exhibits no 3'-5' exonuclease (proofreading) activity. May be involved in translesional synthesis, in conjunction with the beta clamp from PolIII. In Lactococcus lactis subsp. lactis (strain IL1403) (Streptococcus lactis), this protein is DNA polymerase IV.